The primary structure comprises 375 residues: Cobalt-precorrin-5B C(1)-methyltransferase (375 aa).

It belongs to the CbiD family.

The catalysed reaction is Co-precorrin-5B + S-adenosyl-L-methionine = Co-precorrin-6A + S-adenosyl-L-homocysteine. The protein operates within cofactor biosynthesis; adenosylcobalamin biosynthesis; cob(II)yrinate a,c-diamide from sirohydrochlorin (anaerobic route): step 6/10. Its function is as follows. Catalyzes the methylation of C-1 in cobalt-precorrin-5B to form cobalt-precorrin-6A. The protein is Cobalt-precorrin-5B C(1)-methyltransferase of Fusobacterium nucleatum subsp. nucleatum (strain ATCC 25586 / DSM 15643 / BCRC 10681 / CIP 101130 / JCM 8532 / KCTC 2640 / LMG 13131 / VPI 4355).